The primary structure comprises 158 residues: C-type lectin BfL-2 (158 aa).

A signal peptide spans 1–21 (MGHFTFIGLCLLAMFLSLSGA). 4 disulfides stabilise this stretch: Cys-26/Cys-37, Cys-54/Cys-154, Cys-61/Cys-156, and Cys-129/Cys-146. Residues 33–155 (KNGLCYKVFS…CETLHPFICQ (123 aa)) form the C-type lectin domain. Positions 119–121 (EPN) match the Mannose-binding motif. An N-linked (GlcNAc...) asparagine glycan is attached at Asn-121. Ca(2+)-binding residues include Glu-127, Asn-142, and Asp-143.

The protein belongs to the true venom lectin family. As to quaternary structure, homodimer; non-covalently linked. In terms of tissue distribution, expressed by the venom gland.

It localises to the secreted. In terms of biological role, mannose-binding lectin which recognizes specific carbohydrate structures and agglutinates a variety of animal cells by binding to cell-surface glycoproteins and glycolipids. May be a calcium-dependent lectin. In Bungarus fasciatus (Banded krait), this protein is C-type lectin BfL-2.